Here is a 314-residue protein sequence, read N- to C-terminus: Epithelial cell adhesion molecule (314 aa).

Positions 1–23 (MAPPQVLAFGLLLAAATAAVAAA) are cleaved as a signal peptide. Residues 24–265 (QQGCVCENYK…PPEFSMQGLQ (242 aa)) lie on the Extracellular side of the membrane. 6 disulfides stabilise this stretch: Cys27–Cys46, Cys29–Cys59, Cys38–Cys48, Cys66–Cys99, Cys110–Cys116, and Cys118–Cys135. An N-linked (GlcNAc...) asparagine glycan is attached at Asn37. The Thyroglobulin type-1 domain occupies 63 to 135 (ASKCLVMKAE…RTDKDSEISC (73 aa)). Residue Asn111 is glycosylated (N-linked (GlcNAc...) asparagine). The N-linked (GlcNAc...) asparagine glycan is linked to Asn198. The helical transmembrane segment at 266-288 (AGIIAVIAVVAIAIVAGIIVLIV) threads the bilayer. The Cytoplasmic portion of the chain corresponds to 289 to 314 (STKKRRAKYEKAEIKEMGEMHRELNA).

The protein belongs to the EPCAM family. As to quaternary structure, monomer. Interacts with phosphorylated CLDN7. In terms of processing, glycosylation at Asn-198 is crucial for protein stability.

The protein localises to the lateral cell membrane. Its subcellular location is the cell junction. It localises to the tight junction. In terms of biological role, may act as a physical homophilic interaction molecule between intestinal epithelial cells (IECs) and intraepithelial lymphocytes (IELs) at the mucosal epithelium for providing immunological barrier as a first line of defense against mucosal infection. Plays a role in embryonic stem cells proliferation and differentiation. Up-regulates the expression of FABP5, MYC and cyclins A and E. This Sus scrofa (Pig) protein is Epithelial cell adhesion molecule (TACSTD1).